A 144-amino-acid polypeptide reads, in one-letter code: MYSEIQRERADIGGLMARPEYREWNPELIKPKKLLNPVKASRSHQELHRELLMNHRRGLGVDSKPELQRVLEHRRRNQLIKKKKEELEAKRLQCPFEQELLRRQQRLNQLEKPPEKEEDHAPEFIKVRENLRRIATLTSEEREL.

Residues E66–K112 adopt a coiled-coil conformation. Residues R74–K84 carry the Nuclear localization signal motif. The tract at residues Q105–F124 is disordered. Positions K112–F124 are enriched in basic and acidic residues.

This sequence belongs to the FAM107 family. Interacts with ACTB. Interacts with COMMD1; this interaction stabilizes COMMD1 in the nucleus. Interacts with MAP1A. Interacts with PRDX1. Interacts with F-actin. As to expression, widely expressed. Expressed in neurons. Expressed in malignant glial tumors. Expression is reduced or absent in a number of cancer cell lines.

The protein localises to the nucleus. The protein resides in the cytoplasm. It localises to the cytoskeleton. It is found in the stress fiber. Its subcellular location is the cell junction. The protein localises to the focal adhesion. The protein resides in the cell projection. It localises to the ruffle membrane. It is found in the synapse. Functionally, stress-inducible actin-binding protein that plays a role in synaptic and cognitive functions by modulating actin filamentous (F-actin) dynamics. Mediates polymerization of globular actin to F-actin. Also binds to, stabilizes and bundles F-actin. Involved in synaptic function by regulating neurite outgrowth in an actin-dependent manner and for the acquisition of hippocampus-dependent cognitive function, such as learning and long-term memory. Plays a role in the actin and microtubule cytoskeleton organization; negatively regulates focal adhesion (FA) assembly promoting malignant glial cell migration in an actin-, microtubule- and MAP1A-dependent manner. Also involved in neuroblastoma G1/S phase cell cycle progression and cell proliferation inhibition by stimulating ubiquitination of NF-kappa-B subunit RELA and NF-kappa-B degradation in a COMMD1- and actin-dependent manner. May play a role in tumor development. This Homo sapiens (Human) protein is Actin-associated protein FAM107A.